The chain runs to 273 residues: L-cysteine S-thiosulfotransferase subunit SoxA (273 aa).

The signal sequence occupies residues M1–A24. C74 and C110 are joined by a disulfide. Positions E162–R273 constitute a Cytochrome c domain. The heme site is built by C182 and H186. R230 is a binding site for substrate. Position 234 (C234) interacts with heme. C234 serves as the catalytic Cysteine persulfide intermediate.

It belongs to the SoxA family. Heterodimer of SoxA and SoxX. It depends on heme as a cofactor. Post-translationally, cysteine persulfide at Cys-234.

The protein resides in the periplasm. It carries out the reaction L-cysteinyl-[SoxY protein] + thiosulfate + 2 Fe(III)-[cytochrome c] = S-sulfosulfanyl-L-cysteinyl-[SoxY protein] + 2 Fe(II)-[cytochrome c] + 2 H(+). It catalyses the reaction S-sulfanyl-L-cysteinyl-[SoxY protein] + thiosulfate + 2 Fe(III)-[cytochrome c] = S-(2-sulfodisulfanyl)-L-cysteinyl-[SoxY protein] + 2 Fe(II)-[cytochrome c] + 2 H(+). C-type monoheme cytochrome, which is part of the SoxAX cytochrome complex involved in sulfur oxidation. The SoxAX complex catalyzes the formation of a heterodisulfide bond between the conserved cysteine residue on a sulfur carrier SoxYZ complex subunit SoxY and thiosulfate or other inorganic sulfur substrates. This leads to the liberation of two electrons, which may be transferred from the SoxAX complex to another cytochrome c that then channels them into the respiratory electron transport chain. Some electrons may be used for reductive CO(2) fixation. This is L-cysteine S-thiosulfotransferase subunit SoxA from Hydrogenophilus thermoluteolus (Pseudomonas hydrogenothermophila).